The sequence spans 292 residues: Ribosomal protein L11 methyltransferase (292 aa).

Residues threonine 143, glycine 164, aspartate 186, and asparagine 228 each contribute to the S-adenosyl-L-methionine site.

It belongs to the methyltransferase superfamily. PrmA family.

It localises to the cytoplasm. It carries out the reaction L-lysyl-[protein] + 3 S-adenosyl-L-methionine = N(6),N(6),N(6)-trimethyl-L-lysyl-[protein] + 3 S-adenosyl-L-homocysteine + 3 H(+). In terms of biological role, methylates ribosomal protein L11. This Aeromonas salmonicida (strain A449) protein is Ribosomal protein L11 methyltransferase.